We begin with the raw amino-acid sequence, 491 residues long: 23S rRNA (uracil(1939)-C(5))-methyltransferase RlmD (491 aa).

Basic and acidic residues predominate over residues Met1–Ile10. The tract at residues Met1–Pro28 is disordered. The TRAM domain maps to Ala18 to Ala81. Cys94, Cys104, Cys107, and Cys186 together coordinate [4Fe-4S] cluster. Residues Gln294, Phe323, Asn328, Glu344, Asn379, and Asp400 each coordinate S-adenosyl-L-methionine. The Nucleophile role is filled by Cys447.

It belongs to the class I-like SAM-binding methyltransferase superfamily. RNA M5U methyltransferase family. RlmD subfamily.

The catalysed reaction is uridine(1939) in 23S rRNA + S-adenosyl-L-methionine = 5-methyluridine(1939) in 23S rRNA + S-adenosyl-L-homocysteine + H(+). Functionally, catalyzes the formation of 5-methyl-uridine at position 1939 (m5U1939) in 23S rRNA. This Paracidovorax citrulli (strain AAC00-1) (Acidovorax citrulli) protein is 23S rRNA (uracil(1939)-C(5))-methyltransferase RlmD.